Here is a 618-residue protein sequence, read N- to C-terminus: Proline--tRNA ligase (618 aa).

The protein belongs to the class-II aminoacyl-tRNA synthetase family. ProS type 1 subfamily. Homodimer.

It is found in the cytoplasm. It carries out the reaction tRNA(Pro) + L-proline + ATP = L-prolyl-tRNA(Pro) + AMP + diphosphate. Catalyzes the attachment of proline to tRNA(Pro) in a two-step reaction: proline is first activated by ATP to form Pro-AMP and then transferred to the acceptor end of tRNA(Pro). As ProRS can inadvertently accommodate and process non-cognate amino acids such as alanine and cysteine, to avoid such errors it has two additional distinct editing activities against alanine. One activity is designated as 'pretransfer' editing and involves the tRNA(Pro)-independent hydrolysis of activated Ala-AMP. The other activity is designated 'posttransfer' editing and involves deacylation of mischarged Ala-tRNA(Pro). The misacylated Cys-tRNA(Pro) is not edited by ProRS. The polypeptide is Proline--tRNA ligase (Streptococcus uberis (strain ATCC BAA-854 / 0140J)).